The primary structure comprises 310 residues: MKVGIVGAGMVGSASAYALTMLGIASEIVLVDYNTDLAQAQAEDISHAVPFVSATLVRAGDYGDFAGAGVVIISAGVSQKRGETRLELLGRNAEVFRQVVDQVLAAAPNAILLIASNPVDIMTDIATRLSGLAPQRVIGSGTILDTARFRSLLGRYLEISPQSVHAYVLGEHGDSEVLAWSNAMVGAVPLMSFAKQAGKPVTDTVRSEIDAGVRHAADKIIKGKGATYYGIGAGLARIVKAIASDQRDVLSVSSVTAELAGVTNVAASVPRVIGSSGILMDLVPDLDETERIALAKSARMLKDLALSVPC.

Residues valine 11, aspartate 32, tyrosine 62, and 76 to 77 contribute to the NAD(+) site; that span reads GV. Residues glutamine 79, arginine 85, and 117-120 contribute to the substrate site; that span reads NPVD. NAD(+)-binding positions include 115-117 and serine 140; that span reads ASN. 145–148 lines the substrate pocket; it reads DTAR. Arginine 150 and histidine 165 together coordinate beta-D-fructose 1,6-bisphosphate. Histidine 172 acts as the Proton acceptor in catalysis. Position 227 (threonine 227) interacts with substrate.

This sequence belongs to the LDH/MDH superfamily. LDH family. As to quaternary structure, homotetramer.

Its subcellular location is the cytoplasm. The catalysed reaction is (S)-lactate + NAD(+) = pyruvate + NADH + H(+). It functions in the pathway fermentation; pyruvate fermentation to lactate; (S)-lactate from pyruvate: step 1/1. Its activity is regulated as follows. Allosterically activated by fructose 1,6-bisphosphate (FBP). Catalyzes the conversion of lactate to pyruvate. This is L-lactate dehydrogenase from Allorhizobium ampelinum (strain ATCC BAA-846 / DSM 112012 / S4) (Agrobacterium vitis (strain S4)).